The following is a 1006-amino-acid chain: Pleckstrin homology domain-containing family G member 5 (1006 aa).

Disordered regions lie at residues 1 to 71 (MHYD…HTDD), 148 to 198 (PAKP…DILA), and 212 to 242 (EASI…GDSW). Positions 36–45 (DLEEEEEESS) are enriched in acidic residues. 2 stretches are compositionally biased toward basic and acidic residues: residues 151–165 (PGDE…KDSK) and 183–194 (ERVDAQSRRESL). Residues 224–242 (SSCSLPSGSSGSTNTGDSW) show a composition bias toward low complexity. Residues 336-528 (HQQEAVWELL…ERFIHHVNAC (193 aa)) enclose the DH domain. Positions 584 to 684 (QLLLEGSLRM…WVDTIYNAQN (101 aa)) constitute a PH domain. Disordered regions lie at residues 690–754 (RAQE…ASDG), 768–820 (DTLS…SAYG), and 837–863 (AELV…RRTP). The segment covering 704–726 (LEEEEDEQEEEEEEEEEEEEGED) has biased composition (acidic residues). 2 stretches are compositionally biased toward polar residues: residues 727–754 (SGTS…ASDG) and 769–785 (TLSS…SQSD). Phosphothreonine is present on threonine 729. Serine 734 is modified (phosphoserine). Positions 786–803 (ETSLSTTASSATPTSELL) are enriched in low complexity. Positions 847–856 (PRVPSPPPSP) are enriched in pro residues. Residues serine 851, serine 876, and serine 881 each carry the phosphoserine modification. The tract at residues 950 to 979 (AGSHRKRCGDLPSGASPRVQPEPPPGVSAQ) is disordered.

In terms of assembly, interacts with GIPC1/synectin and RHOA. As to expression, predominantly expressed in the peripheral nervous system and brain. Highest expression is observed in heart, lung, kidney, testis and moderate expression is present in spleen, pancreas, skeletal muscle, ovary and liver. Weakly expressed in glioblastoma (GBM) cell lines.

It is found in the cytoplasm. It localises to the perinuclear region. The protein resides in the cell membrane. The protein localises to the cell junction. Its subcellular location is the cell projection. It is found in the lamellipodium. Functionally, functions as a guanine exchange factor (GEF) for RAB26 and thus regulates autophagy of synaptic vesicles in axon terminal of motoneurons. Involved in the control of neuronal cell differentiation. Plays a role in angiogenesis through regulation of endothelial cells chemotaxis. Also affects the migration, adhesion, and matrix/bone degradation in macrophages and osteoclasts. This chain is Pleckstrin homology domain-containing family G member 5 (PLEKHG5), found in Homo sapiens (Human).